Reading from the N-terminus, the 132-residue chain is EF-hand calcium-binding domain-containing protein 10 (132 aa).

EF-hand domains are found at residues 64-99 (MDNS…LGLC) and 120-132 (EMNK…WSMF).

The polypeptide is EF-hand calcium-binding domain-containing protein 10 (Efcab10) (Mus musculus (Mouse)).